A 190-amino-acid polypeptide reads, in one-letter code: Shikimate kinase (190 aa).

Residue 22–27 participates in ATP binding; the sequence is GSGKST. Residue serine 26 participates in Mg(2+) binding. The substrate site is built by aspartate 44, arginine 68, and glycine 90. Arginine 127 serves as a coordination point for ATP. Residue arginine 146 participates in substrate binding.

It belongs to the shikimate kinase family. As to quaternary structure, monomer. Requires Mg(2+) as cofactor.

It localises to the cytoplasm. The enzyme catalyses shikimate + ATP = 3-phosphoshikimate + ADP + H(+). It functions in the pathway metabolic intermediate biosynthesis; chorismate biosynthesis; chorismate from D-erythrose 4-phosphate and phosphoenolpyruvate: step 5/7. In terms of biological role, catalyzes the specific phosphorylation of the 3-hydroxyl group of shikimic acid using ATP as a cosubstrate. The chain is Shikimate kinase from Microcystis aeruginosa (strain NIES-843 / IAM M-2473).